We begin with the raw amino-acid sequence, 136 residues long: Ribonuclease P protein component (136 aa).

It belongs to the RnpA family. Consists of a catalytic RNA component (M1 or rnpB) and a protein subunit.

The catalysed reaction is Endonucleolytic cleavage of RNA, removing 5'-extranucleotides from tRNA precursor.. Functionally, RNaseP catalyzes the removal of the 5'-leader sequence from pre-tRNA to produce the mature 5'-terminus. It can also cleave other RNA substrates such as 4.5S RNA. The protein component plays an auxiliary but essential role in vivo by binding to the 5'-leader sequence and broadening the substrate specificity of the ribozyme. This is Ribonuclease P protein component from Arthrobacter sp. (strain FB24).